A 38-amino-acid polypeptide reads, in one-letter code: Kappa-actitoxin-Bcs3a (38 aa).

A ShKT domain is found at 2–37 (CIDRFPTGTCKHVKKGGSCKNSQKYRINCAKTCGLC). 3 disulfides stabilise this stretch: C2–C37, C11–C30, and C20–C34. Positions 25–26 (KY) are crucial for binding to potassium channels.

This sequence belongs to the sea anemone type 1 potassium channel toxin family. Type 1b subfamily.

It localises to the secreted. The protein localises to the nematocyst. Functionally, inhibits voltage-gated potassium channels (IC(50)=405.0 nM for rKCNA1/Kv1.1, IC(50)=0.03 nM for rKCNA2/Kv1.2, IC(50)=1.31 nM for rKCNA6/Kv1.6, IC(50)=74.11 nM for hKCNA3/Kv1.3, and IC(50)=247.69 nM for insect Shaker IR). Binds the Shaker IR channels in a voltage-independent manner. The polypeptide is Kappa-actitoxin-Bcs3a (Bunodosoma caissarum (Sea anemone)).